A 905-amino-acid polypeptide reads, in one-letter code: DNA gyrase subunit A (905 aa).

Residues 35–524 enclose the Topo IIA-type catalytic domain; sequence IPDVRDGLKP…GEFDQDIEDL (490 aa). The O-(5'-phospho-DNA)-tyrosine intermediate role is filled by Tyr-123. The GyrA-box motif lies at 551-557; sequence QKRGGKG. The disordered stretch occupies residues 882–905; sequence IAESSDDNEEDSEFEEEVAEEGSE. Acidic residues predominate over residues 885-905; that stretch reads SSDDNEEDSEFEEEVAEEGSE.

The protein belongs to the type II topoisomerase GyrA/ParC subunit family. In terms of assembly, heterotetramer, composed of two GyrA and two GyrB chains. In the heterotetramer, GyrA contains the active site tyrosine that forms a transient covalent intermediate with DNA, while GyrB binds cofactors and catalyzes ATP hydrolysis.

Its subcellular location is the cytoplasm. The enzyme catalyses ATP-dependent breakage, passage and rejoining of double-stranded DNA.. In terms of biological role, a type II topoisomerase that negatively supercoils closed circular double-stranded (ds) DNA in an ATP-dependent manner to modulate DNA topology and maintain chromosomes in an underwound state. Negative supercoiling favors strand separation, and DNA replication, transcription, recombination and repair, all of which involve strand separation. Also able to catalyze the interconversion of other topological isomers of dsDNA rings, including catenanes and knotted rings. Type II topoisomerases break and join 2 DNA strands simultaneously in an ATP-dependent manner. The chain is DNA gyrase subunit A from Rickettsia bellii (strain RML369-C).